We begin with the raw amino-acid sequence, 132 residues long: UPF0060 membrane protein SG1469 (132 aa).

3 helical membrane-spanning segments follow: residues 5–25 (VLLY…PYCY), 32–52 (LLLI…VLYP), and 60–80 (AAYG…IDGI).

This sequence belongs to the UPF0060 family.

It is found in the cell inner membrane. This Sodalis glossinidius (strain morsitans) protein is UPF0060 membrane protein SG1469.